We begin with the raw amino-acid sequence, 313 residues long: Ribosomal RNA small subunit methyltransferase H (313 aa).

Residues 36 to 38, D56, F80, D102, and Q109 contribute to the S-adenosyl-L-methionine site; that span reads GGH.

Belongs to the methyltransferase superfamily. RsmH family.

It localises to the cytoplasm. It catalyses the reaction cytidine(1402) in 16S rRNA + S-adenosyl-L-methionine = N(4)-methylcytidine(1402) in 16S rRNA + S-adenosyl-L-homocysteine + H(+). Specifically methylates the N4 position of cytidine in position 1402 (C1402) of 16S rRNA. This is Ribosomal RNA small subunit methyltransferase H from Actinobacillus pleuropneumoniae serotype 3 (strain JL03).